The primary structure comprises 243 residues: Derlin-1.1 (243 aa).

Topologically, residues 1 to 20 (MSSPAEYYKSLPPISKAYGT) are cytoplasmic. A helical membrane pass occupies residues 21–41 (LCFFTTVLVQLQILHPLFLYL). Residues 42–55 (DYPLVFKKFEIWRL) are Lumenal-facing. Residues 56–76 (LTSFFFLAPFSMKFGIRLLMI) form a helical membrane-spanning segment. Over 77–94 (ARYGVMLEKGAFDKRTAD) the chain is Cytoplasmic. The chain crosses the membrane as a helical span at residues 95–115 (FLWMMIFGAISLLVLSIIPLF). Topologically, residues 116 to 157 (NSFFLGIPMVSMLLYVWSRENPNAQINIYGLVQLRSFYLPWA) are lumenal. A helical membrane pass occupies residues 158 to 178 (MLLLDVIFGSSLMPGLLGIMV). At 179–243 (GHLYYFFAVL…FRGRSYRLNQ (65 aa)) the chain is on the cytoplasmic side. Residues 219-243 (SPVRPPANGNSGSGVFRGRSYRLNQ) form a disordered region.

The protein belongs to the derlin family. Expressed in roots, stalks, leaves, immature ears, embryo and endosperm.

It localises to the endoplasmic reticulum membrane. Functionally, may be involved in the degradation process of specific misfolded endoplasmic reticulum (ER) luminal proteins. The polypeptide is Derlin-1.1 (DER1.1) (Zea mays (Maize)).